The following is a 154-amino-acid chain: Oleosin 16.4 kDa (154 aa).

A2 is modified (N-acetylalanine). Positions 2-33 (ADRDRSYRTFDQVVRGDRTNYQSGPSTTQVLT) are polar. 3 helical membrane-spanning segments follow: residues 31–51 (VLTVLTLLPIGGTLLALAGLT), 65–85 (LFVIFSPVLVPAAIAVFMAVA), and 86–106 (GFLSSGAFGLTGLSSLSYVFN). Residues 34-105 (VLTLLPIGGT…TGLSSLSYVF (72 aa)) form a hydrophobic region.

Belongs to the oleosin family.

The protein localises to the lipid droplet. It is found in the membrane. Its function is as follows. May have a structural role to stabilize the lipid body during desiccation of the seed by preventing coalescence of the oil. Probably interacts with both lipid and phospholipid moieties of lipid bodies. May also provide recognition signals for specific lipase anchorage in lipolysis during seedling growth. This Gossypium hirsutum (Upland cotton) protein is Oleosin 16.4 kDa (MATP7).